The sequence spans 192 residues: Pyridoxal 5'-phosphate synthase subunit PdxT (192 aa).

Residue 46–48 (GES) coordinates L-glutamine. Cysteine 78 serves as the catalytic Nucleophile. L-glutamine-binding positions include arginine 106 and 135 to 136 (IR). Active-site charge relay system residues include histidine 171 and glutamate 173.

The protein belongs to the glutaminase PdxT/SNO family. In terms of assembly, in the presence of PdxS, forms a dodecamer of heterodimers. Only shows activity in the heterodimer.

The enzyme catalyses aldehydo-D-ribose 5-phosphate + D-glyceraldehyde 3-phosphate + L-glutamine = pyridoxal 5'-phosphate + L-glutamate + phosphate + 3 H2O + H(+). It carries out the reaction L-glutamine + H2O = L-glutamate + NH4(+). The protein operates within cofactor biosynthesis; pyridoxal 5'-phosphate biosynthesis. Its function is as follows. Catalyzes the hydrolysis of glutamine to glutamate and ammonia as part of the biosynthesis of pyridoxal 5'-phosphate. The resulting ammonia molecule is channeled to the active site of PdxS. This chain is Pyridoxal 5'-phosphate synthase subunit PdxT, found in Kosmotoga olearia (strain ATCC BAA-1733 / DSM 21960 / TBF 19.5.1).